The primary structure comprises 199 residues: FMN-dependent NADH:quinone oxidoreductase 2 (199 aa).

FMN contacts are provided by residues Ser10, 17–19 (SDS), and 135–138 (TKGG).

The protein belongs to the azoreductase type 1 family. In terms of assembly, homodimer. It depends on FMN as a cofactor.

It catalyses the reaction 2 a quinone + NADH + H(+) = 2 a 1,4-benzosemiquinone + NAD(+). The enzyme catalyses N,N-dimethyl-1,4-phenylenediamine + anthranilate + 2 NAD(+) = 2-(4-dimethylaminophenyl)diazenylbenzoate + 2 NADH + 2 H(+). Its function is as follows. Quinone reductase that provides resistance to thiol-specific stress caused by electrophilic quinones. In terms of biological role, also exhibits azoreductase activity. Catalyzes the reductive cleavage of the azo bond in aromatic azo compounds to the corresponding amines. This is FMN-dependent NADH:quinone oxidoreductase 2 from Mesoplasma florum (strain ATCC 33453 / NBRC 100688 / NCTC 11704 / L1) (Acholeplasma florum).